The primary structure comprises 401 residues: O-methyltransferase mfmE (401 aa).

S-adenosyl-L-methionine-binding positions include 243-244 (GG) and Asp268. The Proton acceptor role is filled by His308.

The protein belongs to the class I-like SAM-binding methyltransferase superfamily. Cation-independent O-methyltransferase family. COMT subfamily.

It participates in secondary metabolite biosynthesis; terpenoid biosynthesis. In terms of biological role, O-methyltransferase; part of the gene cluster that mediates the biosynthesis of the phthalide-terpenoid hybrid 11'-O-desmethylfendlerol. Within the pathway, mfmE catalyzes the 7-O-methylation of the phthalide 5,7-dihydroxy-4-(hydroxymethyl)-6-methylphthalide to yield 5-hydroxy-4-(hydroxymethyl)-7-methoxy-6-methylphthalide. The biosynthesis of 11'-O-desmethylfendlerol begins with the NR-PKS mfmB that forms 3,5-dimethylorsellinic acid (DMOA), which is then transformed into the phthalide 5,7-dihydroxy-4-(hydroxymethyl)-6-methylphthalide by the cytochrome P450 monooxygenase mfmA and the hydrolase mfmC. Subsequently, the methyltransferase mfmE catalyzes 7-O-methylation to yield 5-hydroxy-4-(hydroxymethyl)-7-methoxy-6-methylphthalide, which undergoes C-3 hydroxylation by the cytochrome P450 monooxygenase mfmF. The resultant cyclopolic acid (2,5-dihydroxy-4-(hydroxymethyl)-7-methoxy-6-methylphthalide) is then farnesylated by the DMATS-type prenyltransferase mfmD to afford 5-O-farnesylcyclopolic acid. Finally, the Pyr4-family terpene cyclase mfmH cyclizes the farnesyl moiety of 5-O-farnesylcyclopolic acid into a drimane-like structure, thus completing the biosynthesis of 11'-O-desmethylfendlerol. This is O-methyltransferase mfmE from Annulohypoxylon moriforme (Filamentous fungus).